The sequence spans 589 residues: 3-hydroxy-3-methylglutaryl coenzyme A reductase 2-B (589 aa).

Residues M1–P35 lie on the Lumenal side of the membrane. The helical transmembrane segment at L36–L56 threads the bilayer. Residues L57–A79 are Cytoplasmic-facing. A helical transmembrane segment spans residues A80–V100. Topologically, residues Q101–R544 are lumenal. N256 carries N-linked (GlcNAc...) asparagine glycosylation. Residue E268 is the Charge relay system of the active site. N-linked (GlcNAc...) asparagine glycosylation occurs at N332. Active-site charge relay system residues include K400 and D476. A helical membrane pass occupies residues L545–L565. At A566 to S589 the chain is on the cytoplasmic side. H574 acts as the Proton donor in catalysis.

It belongs to the HMG-CoA reductase family.

Its subcellular location is the endoplasmic reticulum membrane. It carries out the reaction (R)-mevalonate + 2 NADP(+) + CoA = (3S)-3-hydroxy-3-methylglutaryl-CoA + 2 NADPH + 2 H(+). It functions in the pathway metabolic intermediate biosynthesis; (R)-mevalonate biosynthesis; (R)-mevalonate from acetyl-CoA: step 3/3. Functionally, catalyzes the synthesis of mevalonate, the specific precursor of all isoprenoid compounds present in plants. Component of the triterpene saponins (e.g. ginsenosides or panaxosides) and phytosterols biosynthetic pathways. Promotes triterpenes accumulation in roots. In Panax ginseng (Korean ginseng), this protein is 3-hydroxy-3-methylglutaryl coenzyme A reductase 2-B.